A 728-amino-acid polypeptide reads, in one-letter code: Catalase-peroxidase (728 aa).

The tryptophyl-tyrosyl-methioninium (Trp-Tyr) (with M-251) cross-link spans 97–225; it reads WHSAGTYRIA…LAAVMMGLIY (129 aa). Histidine 98 functions as the Proton acceptor in the catalytic mechanism. Residues 225-251 constitute a cross-link (tryptophyl-tyrosyl-methioninium (Tyr-Met) (with W-97)); that stretch reads YVNPEGVDGNPDPLRTAQDIRITFARM. Position 266 (histidine 266) interacts with heme b.

It belongs to the peroxidase family. Peroxidase/catalase subfamily. As to quaternary structure, homodimer or homotetramer. The cofactor is heme b. In terms of processing, formation of the three residue Trp-Tyr-Met cross-link is important for the catalase, but not the peroxidase activity of the enzyme.

The enzyme catalyses H2O2 + AH2 = A + 2 H2O. It carries out the reaction 2 H2O2 = O2 + 2 H2O. In terms of biological role, bifunctional enzyme with both catalase and broad-spectrum peroxidase activity. This Shewanella putrefaciens (strain CN-32 / ATCC BAA-453) protein is Catalase-peroxidase.